A 306-amino-acid chain; its full sequence is Agmatinase (306 aa).

Residues histidine 126, aspartate 149, histidine 151, aspartate 153, aspartate 230, and aspartate 232 each contribute to the Mn(2+) site.

The protein belongs to the arginase family. Agmatinase subfamily. Mn(2+) is required as a cofactor.

The catalysed reaction is agmatine + H2O = urea + putrescine. It functions in the pathway amine and polyamine biosynthesis; putrescine biosynthesis via agmatine pathway; putrescine from agmatine: step 1/1. Its function is as follows. Catalyzes the formation of putrescine from agmatine. The chain is Agmatinase from Shigella boydii serotype 18 (strain CDC 3083-94 / BS512).